The chain runs to 248 residues: UPF0736 protein BCB4264_A1231 (248 aa).

The protein belongs to the UPF0736 family.

This is UPF0736 protein BCB4264_A1231 from Bacillus cereus (strain B4264).